The chain runs to 330 residues: Aspartate--ammonia ligase (330 aa).

The protein belongs to the class-II aminoacyl-tRNA synthetase family. AsnA subfamily.

Its subcellular location is the cytoplasm. It catalyses the reaction L-aspartate + NH4(+) + ATP = L-asparagine + AMP + diphosphate + H(+). The protein operates within amino-acid biosynthesis; L-asparagine biosynthesis; L-asparagine from L-aspartate (ammonia route): step 1/1. This chain is Aspartate--ammonia ligase, found in Aeromonas salmonicida (strain A449).